A 72-amino-acid chain; its full sequence is NADH dehydrogenase [ubiquinone] 1 beta subcomplex subunit 3-A (72 aa).

The helical transmembrane segment at 31 to 48 (ALPGIGIGVGAFCVYLVG) threads the bilayer.

The protein belongs to the complex I NDUFB3 subunit family. Complex I is composed of at least 49 different subunits.

Its subcellular location is the mitochondrion inner membrane. Its function is as follows. Accessory subunit of the mitochondrial membrane respiratory chain NADH dehydrogenase (Complex I), that is believed not to be involved in catalysis. Complex I functions in the transfer of electrons from NADH to the respiratory chain. The immediate electron acceptor for the enzyme is believed to be ubiquinone. This chain is NADH dehydrogenase [ubiquinone] 1 beta subcomplex subunit 3-A, found in Arabidopsis thaliana (Mouse-ear cress).